The sequence spans 72 residues: Metallothionein-like protein type 2 (72 aa).

Belongs to the metallothionein superfamily. Type 15 family.

In terms of biological role, metallothioneins have a high content of cysteine residues that bind various heavy metals. The sequence is that of Metallothionein-like protein type 2 from Solanum lycopersicum (Tomato).